Here is a 315-residue protein sequence, read N- to C-terminus: Methionyl-tRNA formyltransferase (315 aa).

Position 113-116 (113-116 (SLLP)) interacts with (6S)-5,6,7,8-tetrahydrofolate.

The protein belongs to the Fmt family.

The enzyme catalyses L-methionyl-tRNA(fMet) + (6R)-10-formyltetrahydrofolate = N-formyl-L-methionyl-tRNA(fMet) + (6S)-5,6,7,8-tetrahydrofolate + H(+). Attaches a formyl group to the free amino group of methionyl-tRNA(fMet). The formyl group appears to play a dual role in the initiator identity of N-formylmethionyl-tRNA by promoting its recognition by IF2 and preventing the misappropriation of this tRNA by the elongation apparatus. This is Methionyl-tRNA formyltransferase from Escherichia coli (strain SMS-3-5 / SECEC).